We begin with the raw amino-acid sequence, 139 residues long: MVEVVRNKRPPRGLVPRLRRALAALMEELGVGDKGVTVILTGDRRLRALKREWWGEDEATDVLSFPHYEPGDPFVPPHLGDIWISLDTARRQAEARGASLEEEVLVLAAHGLWHLLGHDHQKEEDWEGFRRVQERILAL.

The Zn(2+) site is built by H110, H114, and H120.

The protein belongs to the endoribonuclease YbeY family. It depends on Zn(2+) as a cofactor.

The protein localises to the cytoplasm. Its function is as follows. Single strand-specific metallo-endoribonuclease involved in late-stage 70S ribosome quality control and in maturation of the 3' terminus of the 16S rRNA. The chain is Endoribonuclease YbeY from Thermus thermophilus (strain ATCC BAA-163 / DSM 7039 / HB27).